The following is a 318-amino-acid chain: Homeobox-leucine zipper protein ATHB-4 (318 aa).

Disordered regions lie at residues 1–23 (MGER…KEPS) and 128–165 (ARGG…RKKL). Residues 8–17 (LGLSLSLGNS) are compositionally biased toward low complexity. The span at 128–140 (ARGGDENEAERAS) shows a compositional bias: basic and acidic residues. A DNA-binding region (homeobox) is located at residues 160–219 (GSRKKLRLSKDQALVLEETFKEHSTLNPKQKLALAKQLNLRARQVEVWFQNRRARTKLKQ). The interval 227-248 (LKRCCDNLTEENRRLQKEVSEL) is leucine-zipper.

It belongs to the HD-ZIP homeobox family. Class II subfamily.

The protein resides in the nucleus. Functionally, probable transcription factor. This Arabidopsis thaliana (Mouse-ear cress) protein is Homeobox-leucine zipper protein ATHB-4 (ATHB-4).